The sequence spans 445 residues: Chromosome partition protein MukF (445 aa).

The segment at 212 to 240 is leucine-zipper; it reads LDETSGNLRELQDTLNAAGDKLQEQLLRI.

This sequence belongs to the MukF family. Interacts, and probably forms a ternary complex, with MukE and MukB via its C-terminal region. The complex formation is stimulated by calcium or magnesium. It is required for an interaction between MukE and MukB.

The protein resides in the cytoplasm. The protein localises to the nucleoid. Involved in chromosome condensation, segregation and cell cycle progression. May participate in facilitating chromosome segregation by condensation DNA from both sides of a centrally located replisome during cell division. Not required for mini-F plasmid partitioning. Probably acts via its interaction with MukB and MukE. Overexpression results in anucleate cells. It has a calcium binding activity. This is Chromosome partition protein MukF from Mannheimia succiniciproducens (strain KCTC 0769BP / MBEL55E).